Here is a 436-residue protein sequence, read N- to C-terminus: GTPase Der (436 aa).

2 EngA-type G domains span residues P4–E167 and I175–N351. GTP is bound by residues G10–S17, D57–I61, N119–D122, G181–S188, D229–M233, and N294–D297. The region spanning K352 to K436 is the KH-like domain.

The protein belongs to the TRAFAC class TrmE-Era-EngA-EngB-Septin-like GTPase superfamily. EngA (Der) GTPase family. Associates with the 50S ribosomal subunit.

Functionally, GTPase that plays an essential role in the late steps of ribosome biogenesis. This chain is GTPase Der, found in Streptococcus pyogenes serotype M3 (strain ATCC BAA-595 / MGAS315).